We begin with the raw amino-acid sequence, 669 residues long: GTP-binding protein 1 (669 aa).

The interval 1–32 is disordered; sequence MATERSRSAMDSPVPASMFAPEPSSPGAARAA. A phosphoserine mark is found at Ser6, Ser8, Ser12, Ser24, Ser25, Ser44, Ser47, and Ser69. In terms of domain architecture, tr-type G spans 158–389; it reads FLEVRVAVVG…LNLLSPRTSY (232 aa). Positions 167–174 are G1; sequence GNVDAGKS. Residue 167-174 participates in GTP binding; that stretch reads GNVDAGKS. The tract at residues 206–210 is G2; the sequence is GRTSS. The interval 252 to 255 is G3; the sequence is DLAG. GTP-binding positions include 252–256 and 308–311; these read DLAGH and TKID. The segment at 308–311 is G4; it reads TKID. Residues 366–368 are G5; it reads SNV. Positions 573-595 are enriched in polar residues; the sequence is LLQTTNNSPMNSKPQQIKMQSTK. The tract at residues 573–669 is disordered; it reads LLQTTNNSPM…GACVTPASGC (97 aa). Ser580 carries the post-translational modification Phosphoserine. Residues 646 to 657 are compositionally biased toward basic residues; the sequence is GRRRGGQRHKVK.

This sequence belongs to the TRAFAC class translation factor GTPase superfamily. Classic translation factor GTPase family. GTPBP1 subfamily. As to quaternary structure, interacts with EXOSC2/RRP4, EXOSC3/RRP40, EXOSC5/RRP46, HNRNPD, HNRNPR and SYNCRIP. Identified in a complex with AANAT mRNA, but does not bind mRNA by itself.

The protein localises to the cytoplasm. Functionally, promotes degradation of target mRNA species. Plays a role in the regulation of circadian mRNA stability. Binds GTP and has GTPase activity. This chain is GTP-binding protein 1 (GTPBP1), found in Homo sapiens (Human).